Here is a 155-residue protein sequence, read N- to C-terminus: Small ribosomal subunit protein mS86 (155 aa).

The transit peptide at 1-27 (MHYMGLFSRAGNIFRQPRALQASNAML) directs the protein to the mitochondrion. The region spanning 36-114 (SKIFVGGLSP…RIIGVHPADS (79 aa)) is the RRM domain.

It belongs to the GR-RBP family. Component of the mitochondrial ribosome small subunit.

Its subcellular location is the mitochondrion. Its function is as follows. Possibly has a role in RNA transcription or processing during stress. This Arabidopsis thaliana (Mouse-ear cress) protein is Small ribosomal subunit protein mS86 (RBG6).